The primary structure comprises 284 residues: 4-hydroxybenzoate octaprenyltransferase (284 aa).

9 consecutive transmembrane segments (helical) span residues 19 to 39 (IPILLILWPTLTALVLASHGL), 42 to 62 (ISYLVIFTIGVVVMRTVGCII), 85 to 105 (GQLSIKNAIWLCISLTLVAFI), 107 to 127 (VLFLNLYTILLSFVALFLAIL), 134 to 154 (FFAIPQLILGLAFNFGIFMAF), 165 to 185 (AWIFYIATICWTIAYDTIYAL), 211 to 231 (ILLFNFLSLLLLIILGIYCDF), 233 to 253 (SFFYLGVVICSLFFVRNYFLY), and 261 to 281 (CINAFSANHWIGLIIFIIAVI).

The protein belongs to the UbiA prenyltransferase family. It depends on Mg(2+) as a cofactor.

It is found in the cell inner membrane. It catalyses the reaction all-trans-octaprenyl diphosphate + 4-hydroxybenzoate = 4-hydroxy-3-(all-trans-octaprenyl)benzoate + diphosphate. Its pathway is cofactor biosynthesis; ubiquinone biosynthesis. In terms of biological role, catalyzes the prenylation of para-hydroxybenzoate (PHB) with an all-trans polyprenyl group. Mediates the second step in the final reaction sequence of ubiquinone-8 (UQ-8) biosynthesis, which is the condensation of the polyisoprenoid side chain with PHB, generating the first membrane-bound Q intermediate 3-octaprenyl-4-hydroxybenzoate. This Francisella tularensis subsp. tularensis (strain FSC 198) protein is 4-hydroxybenzoate octaprenyltransferase.